The following is a 301-amino-acid chain: Probable alpha-L-glutamate ligase 1 (301 aa).

The ATP-grasp domain occupies 104–287 (LQLLSRKGIG…VTEPIVEYIE (184 aa)). Residues Lys141, 178–179 (EY), Asp187, and 211–213 (RSN) contribute to the ATP site. Residues Asp248, Glu260, and Asn262 each contribute to the Mg(2+) site. Residues Asp248, Glu260, and Asn262 each coordinate Mn(2+).

The protein belongs to the RimK family. It depends on Mg(2+) as a cofactor. Requires Mn(2+) as cofactor.

This Shewanella sp. (strain W3-18-1) protein is Probable alpha-L-glutamate ligase 1.